Reading from the N-terminus, the 367-residue chain is Alanine racemase (367 aa).

The active-site Proton acceptor; specific for D-alanine is the Lys40. Residue Lys40 is modified to N6-(pyridoxal phosphate)lysine. A substrate-binding site is contributed by Arg136. The active-site Proton acceptor; specific for L-alanine is Tyr263. Met310 is a substrate binding site.

The protein belongs to the alanine racemase family. The cofactor is pyridoxal 5'-phosphate.

The catalysed reaction is L-alanine = D-alanine. Its pathway is amino-acid biosynthesis; D-alanine biosynthesis; D-alanine from L-alanine: step 1/1. Its function is as follows. Catalyzes the interconversion of L-alanine and D-alanine. May also act on other amino acids. This chain is Alanine racemase (alr), found in Lactococcus lactis subsp. lactis (strain IL1403) (Streptococcus lactis).